The sequence spans 780 residues: GATOR2 complex protein WDR24 (780 aa).

WD repeat units lie at residues 67–107 (SLNF…RNKQ), 113–153 (EHKR…SVST), 156–196 (GQSE…RCER), 200–240 (AHNG…AKEI), 244–286 (QTIA…IPFA), and 290–333 (EHKD…IDRA). The C4-type zinc-finger motif lies at 708–730 (NCSNCKRPMSNKGWICDRCRQCA). Residues cysteine 709, cysteine 712, cysteine 723, cysteine 726, cysteine 733, cysteine 736, cysteine 747, cysteine 750, histidine 752, histidine 755, histidine 758, cysteine 769, cysteine 773, histidine 775, and cysteine 777 each contribute to the Zn(2+) site. The RING-type; atypical zinc finger occupies 731 to 780 (SMCAVCHHVVKGLFVWCQGCCHGGHLQHIMNWMQNNCYCPAGCGHVCEYS).

The protein belongs to the WD repeat WDR24 family. Component of the GATOR2 subcomplex, composed of MIOS, SEC13, SEH1L, WDR24 and WDR59. The GATOR2 complex interacts with CASTOR1 and CASTOR2; the interaction is negatively regulated by arginine. The GATOR2 complex interacts with SESN1, SESN2 and SESN3; the interaction is negatively regulated by amino acids.

It is found in the lysosome membrane. It catalyses the reaction S-ubiquitinyl-[E2 ubiquitin-conjugating enzyme]-L-cysteine + [acceptor protein]-L-lysine = [E2 ubiquitin-conjugating enzyme]-L-cysteine + N(6)-ubiquitinyl-[acceptor protein]-L-lysine.. It participates in protein modification; protein ubiquitination. With respect to regulation, the GATOR2 complex is negatively regulated by the upstream amino acid sensors CASTOR1 and SESN2, which sequester the GATOR2 complex in absence of amino acids. In the presence of abundant amino acids, GATOR2 is released from CASTOR1 and SESN2 and activated. In terms of biological role, catalytic component of the GATOR2 complex, a multiprotein complex that acts as an activator of the amino acid-sensing branch of the mTORC1 signaling pathway. The GATOR2 complex indirectly activates mTORC1 through the inhibition of the GATOR1 subcomplex. GATOR2 probably acts as an E3 ubiquitin-protein ligase toward GATOR1. In the presence of abundant amino acids, the GATOR2 complex mediates ubiquitination of the NPRL2 core component of the GATOR1 complex, leading to GATOR1 inactivation. In the absence of amino acids, GATOR2 is inhibited, activating the GATOR1 complex. In addition to its role in regulation of the mTORC1 complex, promotes the acidification of lysosomes and facilitates autophagic flux. Within the GATOR2 complex, WDR24 constitutes the catalytic subunit that mediates 'Lys-6'-linked ubiquitination of NPRL2. The sequence is that of GATOR2 complex protein WDR24 from Xenopus laevis (African clawed frog).